Reading from the N-terminus, the 515-residue chain is ATP synthase subunit alpha (515 aa).

171–178 (GDRQTGKT) serves as a coordination point for ATP.

This sequence belongs to the ATPase alpha/beta chains family. In terms of assembly, F-type ATPases have 2 components, CF(1) - the catalytic core - and CF(0) - the membrane proton channel. CF(1) has five subunits: alpha(3), beta(3), gamma(1), delta(1), epsilon(1). CF(0) has three main subunits: a(1), b(2) and c(9-12). The alpha and beta chains form an alternating ring which encloses part of the gamma chain. CF(1) is attached to CF(0) by a central stalk formed by the gamma and epsilon chains, while a peripheral stalk is formed by the delta and b chains.

The protein resides in the cell inner membrane. The enzyme catalyses ATP + H2O + 4 H(+)(in) = ADP + phosphate + 5 H(+)(out). Functionally, produces ATP from ADP in the presence of a proton gradient across the membrane. The alpha chain is a regulatory subunit. The polypeptide is ATP synthase subunit alpha (Stenotrophomonas maltophilia (strain R551-3)).